The following is a 730-amino-acid chain: Catalase-peroxidase 1 (730 aa).

A cross-link (tryptophyl-tyrosyl-methioninium (Trp-Tyr) (with M-243)) is located at residues 92–217 (WHSAGTYRTT…LGAAVMGLIY (126 aa)). Catalysis depends on His-93, which acts as the Proton acceptor. The segment at residues 217–243 (YVDPEGPNGNPDPLASAENIRESFGRM) is a cross-link (tryptophyl-tyrosyl-methioninium (Tyr-Met) (with W-92)). Residue His-258 coordinates heme b.

It belongs to the peroxidase family. Peroxidase/catalase subfamily. Homodimer or homotetramer. Heme b is required as a cofactor. In terms of processing, formation of the three residue Trp-Tyr-Met cross-link is important for the catalase, but not the peroxidase activity of the enzyme.

It carries out the reaction H2O2 + AH2 = A + 2 H2O. The enzyme catalyses 2 H2O2 = O2 + 2 H2O. Functionally, bifunctional enzyme with both catalase and broad-spectrum peroxidase activity. This chain is Catalase-peroxidase 1, found in Haloarcula marismortui (strain ATCC 43049 / DSM 3752 / JCM 8966 / VKM B-1809) (Halobacterium marismortui).